The sequence spans 67 residues: Protein AaeX (67 aa).

2 helical membrane-spanning segments follow: residues 3–23 (VLPV…ELII) and 43–63 (LVWH…YLVS).

This sequence belongs to the AaeX family.

It localises to the cell membrane. The polypeptide is Protein AaeX (Pantoea vagans (strain C9-1) (Pantoea agglomerans (strain C9-1))).